Consider the following 859-residue polypeptide: Photoactivated adenylate cyclase subunit beta (859 aa).

Residues 56–149 enclose the BLUF 1 domain; that stretch reads LRRLMYLSKS…GRMYGDWHMK (94 aa). The 129-residue stretch at 205–333 folds into the Guanylate cyclase 1 domain; that stretch reads VVTFIYLVEF…DCINTTSRIA (129 aa). Residues 420-443 form a disordered region; the sequence is RPPIFDDTPKGNPRPRTPGYGGRQ. Positions 471 to 563 constitute a BLUF 2 domain; that stretch reads LTTLTYISQA…RVYPSEWTLT (93 aa). The region spanning 619-748 is the Guanylate cyclase 2 domain; it reads VMLATDICSF…AVSARVMEVE (130 aa). The interval 813 to 859 is disordered; it reads AARSGEKPLTEPEEAKPDFRVSPGRVRHGDSGRRSNSAQGKRSIQVR. A compositionally biased stretch (basic and acidic residues) spans 815–831; it reads RSGEKPLTEPEEAKPDF. Positions 846–859 are enriched in polar residues; sequence RSNSAQGKRSIQVR.

The protein belongs to the adenylyl cyclase class-4/guanylyl cyclase family. As to quaternary structure, heterotetramer of two alpha and two beta subunits. It depends on FAD as a cofactor.

The protein localises to the cell projection. It localises to the cilium. It is found in the flagellum. The catalysed reaction is ATP = 3',5'-cyclic AMP + diphosphate. With respect to regulation, activity increased by up to 80-fold under blue light. Acts as a blue light photoreceptor for the step-up photophobic response. Mediates photoavoidance. The sequence is that of Photoactivated adenylate cyclase subunit beta from Euglena gracilis.